Reading from the N-terminus, the 281-residue chain is Octanoyl-[GcvH]:protein N-octanoyltransferase (281 aa).

Residues 44–250 form the BPL/LPL catalytic domain; it reads GESAATMRSW…TLQQFAPKLT (207 aa). Catalysis depends on C149, which acts as the Acyl-thioester intermediate.

The protein belongs to the octanoyltransferase LipL family.

The catalysed reaction is N(6)-octanoyl-L-lysyl-[glycine-cleavage complex H protein] + L-lysyl-[lipoyl-carrier protein] = N(6)-octanoyl-L-lysyl-[lipoyl-carrier protein] + L-lysyl-[glycine-cleavage complex H protein]. It functions in the pathway protein modification; protein lipoylation via endogenous pathway; protein N(6)-(lipoyl)lysine from octanoyl-[acyl-carrier-protein]. Functionally, catalyzes the amidotransfer (transamidation) of the octanoyl moiety from octanoyl-GcvH to the lipoyl domain of the E2 subunit of lipoate-dependent enzymes. This is Octanoyl-[GcvH]:protein N-octanoyltransferase from Bacillus anthracis.